A 391-amino-acid chain; its full sequence is Heme A synthase (391 aa).

8 helical membrane-spanning segments follow: residues Ile37–Leu57, Arg121–Ala141, Leu152–Ser172, Leu186–Leu206, Thr229–Ile249, Phe298–Gly318, Leu332–Ala352, and Trp354–Ala374. Residue His300 participates in heme binding. A heme-binding site is contributed by His360.

Belongs to the COX15/CtaA family. Type 2 subfamily. As to quaternary structure, interacts with CtaB. The cofactor is heme b.

Its subcellular location is the cell membrane. The enzyme catalyses Fe(II)-heme o + 2 A + H2O = Fe(II)-heme a + 2 AH2. The protein operates within porphyrin-containing compound metabolism; heme A biosynthesis; heme A from heme O: step 1/1. Catalyzes the conversion of heme O to heme A by two successive hydroxylations of the methyl group at C8. The first hydroxylation forms heme I, the second hydroxylation results in an unstable dihydroxymethyl group, which spontaneously dehydrates, resulting in the formyl group of heme A. The chain is Heme A synthase from Cereibacter sphaeroides (strain ATCC 17029 / ATH 2.4.9) (Rhodobacter sphaeroides).